The primary structure comprises 437 residues: Adenylosuccinate synthetase (437 aa).

GTP-binding positions include 12–18 and 40–42; these read GDEGKGK and GHT. Catalysis depends on D13, which acts as the Proton acceptor. Mg(2+)-binding residues include D13 and G40. Residues 13-16, 38-41, T131, R145, Q226, T241, and R305 each bind IMP; these read DEGK and NAGH. The Proton donor role is filled by H41. Substrate is bound at residue 301–307; it reads ATTGRRR. GTP contacts are provided by residues R307, 333 to 335, and 415 to 417; these read KLD and SVG.

It belongs to the adenylosuccinate synthetase family. As to quaternary structure, homodimer. Requires Mg(2+) as cofactor.

The protein localises to the cytoplasm. It carries out the reaction IMP + L-aspartate + GTP = N(6)-(1,2-dicarboxyethyl)-AMP + GDP + phosphate + 2 H(+). Its pathway is purine metabolism; AMP biosynthesis via de novo pathway; AMP from IMP: step 1/2. Its function is as follows. Plays an important role in the de novo pathway of purine nucleotide biosynthesis. Catalyzes the first committed step in the biosynthesis of AMP from IMP. The sequence is that of Adenylosuccinate synthetase from Desulfotalea psychrophila (strain LSv54 / DSM 12343).